Reading from the N-terminus, the 438-residue chain is Coenzyme A disulfide reductase (438 aa).

FAD is bound at residue 8-33; it reads GAVAGGATCASQIRRLDKESDIIIFE. 5 residues coordinate substrate: threonine 15, glutamine 19, arginine 22, serine 39, and asparagine 42. The active-site Nucleophile is the cysteine 43. Cysteine 43 serves as the catalytic Redox-active. Lysine 71 is a substrate binding site. 151-166 contributes to the NADP(+) binding site; it reads VLVVGAGYVSLEVLEN. 267–277 contacts FAD; the sequence is TNVPNIYAIGD. Histidine 299 contributes to the substrate binding site. Tyrosine 419 provides a ligand contact to FAD. A substrate-binding site is contributed by lysine 427.

Belongs to the class-III pyridine nucleotide-disulfide oxidoreductase family. Homodimer. Requires FAD as cofactor.

The enzyme catalyses NADP(+) + 2 CoA = CoA-disulfide + NADPH + H(+). Its function is as follows. Catalyzes specifically the NADPH-dependent reduction of coenzyme A disulfide. The chain is Coenzyme A disulfide reductase from Staphylococcus aureus (strain MSSA476).